A 151-amino-acid chain; its full sequence is 3-dehydroquinate dehydratase (151 aa).

The active-site Proton acceptor is the Tyr-24. 3 residues coordinate substrate: Asn-76, His-82, and Asp-89. His-102 (proton donor) is an active-site residue. Residues 103 to 104 (LS) and Arg-113 each bind substrate.

Belongs to the type-II 3-dehydroquinase family. Homododecamer.

It carries out the reaction 3-dehydroquinate = 3-dehydroshikimate + H2O. Its pathway is metabolic intermediate biosynthesis; chorismate biosynthesis; chorismate from D-erythrose 4-phosphate and phosphoenolpyruvate: step 3/7. Catalyzes a trans-dehydration via an enolate intermediate. This Acinetobacter baumannii (strain ATCC 17978 / DSM 105126 / CIP 53.77 / LMG 1025 / NCDC KC755 / 5377) protein is 3-dehydroquinate dehydratase.